The chain runs to 524 residues: MSQQVIIFDTTLRDGEQALQASLSVKEKIQIAMALERMGVDVMEVGFPVSSPGDFESVQTIARQIKNSRVCGLARCVDKDIDVAAEALRVAEAFRIHVFLATSTLHIESKLKRSFDEVLEMAIRSVKRARNYTDDVEFSCEDAGRTPIDNLCRVVEAAINAGATTINIPDTVGYTTPNQFGGIITTLYDRVPNIDKAIISVHCHDDLGMAVGNSIAAVQAGARQVEGTLNGIGERAGNTSLEEVIMAIKVRQDIMNVHTNINHQEIFRTSQIVSQLCNMPIPANKAIVGSNAFAHSSGIHQDGVLKNRENYEIMSPQTIGLKDVQLNLTSRSGRAAVKHRMEGMGYKEQDYNLDNLYAAFLKLADKKGQVFDYDLEALAFINKQQEEPEHFSLDYFSVQSGSSIMATASVKLICGEEEKAEAATGNGPVDAVYQAINRITGYPIELVKYQLTAKGQGRDALGQVDIVVSYNGRRFHGVGLATDIVESSAKAMVHVLNNIWRSQQVEKEKQRLQQSKHQNNQETV.

In terms of domain architecture, Pyruvate carboxyltransferase spans 5–267; sequence VIIFDTTLRD…HTNINHQEIF (263 aa). Residues Asp14, His202, His204, and Asn238 each coordinate Mn(2+). The regulatory domain stretch occupies residues 392–524; the sequence is SLDYFSVQSG…SKHQNNQETV (133 aa).

The protein belongs to the alpha-IPM synthase/homocitrate synthase family. LeuA type 1 subfamily. As to quaternary structure, homodimer. Requires Mn(2+) as cofactor.

The protein localises to the cytoplasm. The catalysed reaction is 3-methyl-2-oxobutanoate + acetyl-CoA + H2O = (2S)-2-isopropylmalate + CoA + H(+). It functions in the pathway amino-acid biosynthesis; L-leucine biosynthesis; L-leucine from 3-methyl-2-oxobutanoate: step 1/4. In terms of biological role, catalyzes the condensation of the acetyl group of acetyl-CoA with 3-methyl-2-oxobutanoate (2-ketoisovalerate) to form 3-carboxy-3-hydroxy-4-methylpentanoate (2-isopropylmalate). The sequence is that of 2-isopropylmalate synthase from Serratia proteamaculans (strain 568).